We begin with the raw amino-acid sequence, 208 residues long: MKVKICGITHPDDAREAAKAGADYIGMIFAKDSRRCVSEEKAKYIVEAIQEGNSEPVGVFPEHSVEEILAITEATGITSIQLSGEDILFKFSQLREHFSIFYVVSVYSNGQPSAALPPMNDAVTVVYDHIGGERGSPFDWKAFSPFQHNNWMLGGGVNLWNIKEGISLLNPRGIDVSSGVERPGILRKDIFLMQALINSAKELSSSTL.

Belongs to the TrpF family.

The catalysed reaction is N-(5-phospho-beta-D-ribosyl)anthranilate = 1-(2-carboxyphenylamino)-1-deoxy-D-ribulose 5-phosphate. It functions in the pathway amino-acid biosynthesis; L-tryptophan biosynthesis; L-tryptophan from chorismate: step 3/5. The sequence is that of N-(5'-phosphoribosyl)anthranilate isomerase from Chlamydia trachomatis serovar L2 (strain ATCC VR-902B / DSM 19102 / 434/Bu).